The chain runs to 451 residues: Gamma-aminobutyric acid receptor subunit alpha-2 (451 aa).

The N-terminal stretch at 1–28 (MKTKLNIYNMQFLLFVFLVWDPARLVLA) is a signal peptide. The Extracellular segment spans residues 29–249 (NIQEDEAKNN…MTAHFHLKRK (221 aa)). The N-linked (GlcNAc...) asparagine glycan is linked to asparagine 38. Arginine 94 serves as a coordination point for 4-aminobutanoate. An N-linked (GlcNAc...) asparagine glycan is attached at asparagine 138. Threonine 157 is a binding site for 4-aminobutanoate. A disulfide bridge connects residues cysteine 166 and cysteine 180. Residues 250–270 (IGYFVIQTYLPCIMTVILSQV) form a helical membrane-spanning segment. The Cytoplasmic portion of the chain corresponds to 271 to 280 (SFWLNRESVP). The chain crosses the membrane as a helical span at residues 281-300 (ARTVFGVTTVLTMTTLSISA). The Extracellular portion of the chain corresponds to 301–311 (RNSLPKVAYAT). The helical transmembrane segment at 312-332 (AMDWFIAVCYAFVFSALIEFA) threads the bilayer. Residues 333-420 (TVNYFTKRGW…FNSVSKIDRM (88 aa)) are Cytoplasmic-facing. Residues 421 to 441 (SRIVFPVLFGTFNLVYWATYL) form a helical membrane-spanning segment. Residues 442 to 451 (NREPVLGVSP) are Extracellular-facing.

It belongs to the ligand-gated ion channel (TC 1.A.9) family. Gamma-aminobutyric acid receptor (TC 1.A.9.5) subfamily. GABRA2 sub-subfamily. Heteropentamer, formed by a combination of alpha (GABRA1-6), beta (GABRB1-3), gamma (GABRG1-3), delta (GABRD), epsilon (GABRE), rho (GABRR1-3), pi (GABRP) and theta (GABRQ) subunits, each subunit exhibiting distinct physiological and pharmacological properties. Interacts with UBQLN1. Interacts with KIF21B. Interacts with LHFPL4. Interacts with SHISA7; interaction leads to the regulation of GABA(A) receptor trafficking, channel deactivation kinetics and pharmacology. Glycosylated.

It is found in the postsynaptic cell membrane. The protein localises to the cell membrane. The protein resides in the cytoplasmic vesicle membrane. It localises to the cell projection. Its subcellular location is the dendrite. It catalyses the reaction chloride(in) = chloride(out). Activated by pentobarbital. Inhibited by the antagonist bicuculline. Alpha subunit of the heteropentameric ligand-gated chloride channel gated by gamma-aminobutyric acid (GABA), a major inhibitory neurotransmitter in the brain. GABA-gated chloride channels, also named GABA(A) receptors (GABAAR), consist of five subunits arranged around a central pore and contain GABA active binding site(s) located at the alpha and beta subunit interfaces. When activated by GABA, GABAARs selectively allow the flow of chloride anions across the cell membrane down their electrochemical gradient. Chloride influx into the postsynaptic neuron following GABAAR opening decreases the neuron ability to generate a new action potential, thereby reducing nerve transmission. The alpha-2 subunit exhibits synaptogenic activity together with beta-2 and very little to no activity together with beta-3, the gamma-2 subunit being necessary but not sufficient to induce rapid synaptic contacts formation. This chain is Gamma-aminobutyric acid receptor subunit alpha-2, found in Homo sapiens (Human).